A 297-amino-acid polypeptide reads, in one-letter code: uncharacterized protein (297 aa).

Positions 128 to 156 form a coiled coil; the sequence is RGVIVEQESEAAAEKDELESLAKVLESDF.

This is an uncharacterized protein from Bacillus subtilis (strain 168).